The chain runs to 96 residues: Large ribosomal subunit protein uL23 (96 aa).

Belongs to the universal ribosomal protein uL23 family. As to quaternary structure, part of the 50S ribosomal subunit. Contacts protein L29, and trigger factor when it is bound to the ribosome.

Its function is as follows. One of the early assembly proteins it binds 23S rRNA. One of the proteins that surrounds the polypeptide exit tunnel on the outside of the ribosome. Forms the main docking site for trigger factor binding to the ribosome. The sequence is that of Large ribosomal subunit protein uL23 from Maridesulfovibrio salexigens (strain ATCC 14822 / DSM 2638 / NCIMB 8403 / VKM B-1763) (Desulfovibrio salexigens).